Reading from the N-terminus, the 610-residue chain is Ubiquilin-like protein (610 aa).

Positions 31–105 constitute a Ubiquitin-like domain; sequence IRVIVKTPGN…IHVVIKSKHG (75 aa). Positions 562-607 constitute a UBA domain; that stretch reads QAPEVRFSKEMECLQAMGFVNYNANLQALIATDGDTNAAIYKLKSS.

The sequence is that of Ubiquilin-like protein (Ubqlnl) from Mus musculus (Mouse).